We begin with the raw amino-acid sequence, 82 residues long: Small ribosomal subunit protein bS16c (82 aa).

This sequence belongs to the bacterial ribosomal protein bS16 family.

The protein resides in the plastid. Its subcellular location is the chloroplast. In Porphyra purpurea (Red seaweed), this protein is Small ribosomal subunit protein bS16c.